A 344-amino-acid chain; its full sequence is Centromere protein N (344 aa).

Belongs to the CENP-N/CHL4 family.

The protein localises to the nucleus. Its subcellular location is the chromosome. It localises to the centromere. In terms of biological role, probable component of a centromeric complex involved in assembly of kinetochore proteins, mitotic progression and chromosome segregation. The protein is Centromere protein N (CENPN) of Gallus gallus (Chicken).